Consider the following 101-residue polypeptide: Urease subunit beta (101 aa).

Belongs to the urease beta subunit family. As to quaternary structure, heterotrimer of UreA (gamma), UreB (beta) and UreC (alpha) subunits. Three heterotrimers associate to form the active enzyme.

The protein localises to the cytoplasm. It catalyses the reaction urea + 2 H2O + H(+) = hydrogencarbonate + 2 NH4(+). The protein operates within nitrogen metabolism; urea degradation; CO(2) and NH(3) from urea (urease route): step 1/1. This Rhizobium meliloti (strain 1021) (Ensifer meliloti) protein is Urease subunit beta.